The following is an 890-amino-acid chain: UPF0182 protein SYNW1212 (890 aa).

A run of 8 helical transmembrane segments spans residues 21–41, 64–84, 98–118, 134–154, 173–193, 219–239, 268–288, and 295–315; these read WLLQ…AIRW, LTLL…NGLI, WQVS…LVAV, AVVL…SIPL, FAAL…CLGN, RLLM…CWLS, LLTV…SLLL, and VLAV…WLIL.

Belongs to the UPF0182 family.

The protein localises to the cell membrane. The chain is UPF0182 protein SYNW1212 from Parasynechococcus marenigrum (strain WH8102).